A 236-amino-acid chain; its full sequence is LexA repressor (236 aa).

The segment at residues 26–46 is a DNA-binding region (H-T-H motif); the sequence is FDEMKDALDLRSKSGIHRLII. Residues Ser157 and Lys195 each act as for autocatalytic cleavage activity in the active site.

It belongs to the peptidase S24 family. In terms of assembly, homodimer.

It carries out the reaction Hydrolysis of Ala-|-Gly bond in repressor LexA.. Functionally, represses a number of genes involved in the response to DNA damage (SOS response), including recA and lexA. In the presence of single-stranded DNA, RecA interacts with LexA causing an autocatalytic cleavage which disrupts the DNA-binding part of LexA, leading to derepression of the SOS regulon and eventually DNA repair. This is LexA repressor from Methylocella silvestris (strain DSM 15510 / CIP 108128 / LMG 27833 / NCIMB 13906 / BL2).